Consider the following 345-residue polypeptide: L-threonine 3-dehydrogenase (345 aa).

Residue Cys39 coordinates Zn(2+). Catalysis depends on charge relay system residues Thr41 and His44. Zn(2+) is bound by residues His64, Glu65, Cys94, Cys97, Cys100, and Cys108. Residues Ile176, Asp196, Arg201, 263–265, and 287–288 each bind NAD(+); these read LGI and VY.

Belongs to the zinc-containing alcohol dehydrogenase family. Homotetramer. The cofactor is Zn(2+).

The protein resides in the cytoplasm. It catalyses the reaction L-threonine + NAD(+) = (2S)-2-amino-3-oxobutanoate + NADH + H(+). It participates in amino-acid degradation; L-threonine degradation via oxydo-reductase pathway; glycine from L-threonine: step 1/2. Its function is as follows. Catalyzes the NAD(+)-dependent oxidation of L-threonine to 2-amino-3-ketobutyrate. This is L-threonine 3-dehydrogenase from Anaeromyxobacter dehalogenans (strain 2CP-C).